A 202-amino-acid chain; its full sequence is PXMP2/4 family protein 1 (202 aa).

Transmembrane regions (helical) follow at residues 21–41 (PVIT…TLAQ), 54–72 (LMMC…HFWF), 138–154 (KAWM…FRFV), and 161–177 (LISN…LSTV).

This sequence belongs to the peroxisomal membrane protein PXMP2/4 family.

The protein localises to the membrane. The chain is PXMP2/4 family protein 1 from Dictyostelium discoideum (Social amoeba).